Here is a 31-residue protein sequence, read N- to C-terminus: Cytochrome b6-f complex subunit 6 (31 aa).

The chain crosses the membrane as a helical span at residues 4–24; that stretch reads ITSYFGFLLAVLIITSSLFIG.

The protein belongs to the PetL family. In terms of assembly, the 4 large subunits of the cytochrome b6-f complex are cytochrome b6, subunit IV (17 kDa polypeptide, PetD), cytochrome f and the Rieske protein, while the 4 small subunits are PetG, PetL, PetM and PetN. The complex functions as a dimer.

The protein resides in the plastid. It is found in the chloroplast thylakoid membrane. In terms of biological role, component of the cytochrome b6-f complex, which mediates electron transfer between photosystem II (PSII) and photosystem I (PSI), cyclic electron flow around PSI, and state transitions. PetL is important for photoautotrophic growth as well as for electron transfer efficiency and stability of the cytochrome b6-f complex. The sequence is that of Cytochrome b6-f complex subunit 6 from Phaseolus vulgaris (Kidney bean).